Consider the following 160-residue polypeptide: Ribosome maturation factor RimP (160 aa).

This sequence belongs to the RimP family.

It is found in the cytoplasm. Its function is as follows. Required for maturation of 30S ribosomal subunits. The chain is Ribosome maturation factor RimP from Orientia tsutsugamushi (strain Boryong) (Rickettsia tsutsugamushi).